We begin with the raw amino-acid sequence, 498 residues long: Tyrosine 3-monooxygenase (498 aa).

Residues 1 to 10 (MPTPSAPSPQ) are compositionally biased toward pro residues. The segment at 1 to 31 (MPTPSAPSPQPKGFRRAVSEQDAKQAEAVTS) is disordered. The residue at position 19 (Ser-19) is a Phosphoserine; by CaMK2. Residue Ser-31 is modified to Phosphoserine. Residue Ser-40 is modified to Phosphoserine; by CaMK2 and PKA. Fe cation contacts are provided by His-331, His-336, and Glu-376. Position 472 is a phosphoserine (Ser-472).

The protein belongs to the biopterin-dependent aromatic amino acid hydroxylase family. Homotetramer. Interacts (when phosphorylated at Ser-19) with YWHAG; one YWHAG dimer binds to one TH tetramer and this interaction may influence the phosphorylation and dephosphorylation of other sites. Interacts with NT5DC2; the interaction results in reduced phosphorylation and decreased catalytic activity of TH. The cofactor is Fe(2+). Post-translationally, phosphorylated on Ser-19, Ser-31 and Ser-40 by several protein kinases with different site specificities. Phosphorylation at Ser-31 and Ser-40 leads to an increase of TH activity. Phosphorylation at Ser-40 activates the enzyme and also counteracts the feedback inhibition of TH by catecholamines. Phosphorylation of Ser-19 and Ser-31 triggers the proteasomal degradation of TH through the ubiquitin-proteasome pathway. Phosphorylation at Ser-31 facilitates transport of TH from the soma to the nerve terminals via the microtubule network. Phosphorylation at Ser-19 induces the high-affinity binding to the 14-3-3 protein YWHAG; this interaction may influence the phosphorylation and dephosphorylation of other sites. Ser-19 increases the phosphorylation at Ser-40 in a hierarchical manner, leading to increased activity.

Its subcellular location is the cytoplasm. The protein resides in the perinuclear region. It is found in the nucleus. It localises to the cell projection. The protein localises to the axon. Its subcellular location is the cytoplasmic vesicle. The protein resides in the secretory vesicle. It is found in the synaptic vesicle. The enzyme catalyses (6R)-L-erythro-5,6,7,8-tetrahydrobiopterin + L-tyrosine + O2 = (4aS,6R)-4a-hydroxy-L-erythro-5,6,7,8-tetrahydrobiopterin + L-dopa. Its pathway is catecholamine biosynthesis; dopamine biosynthesis; dopamine from L-tyrosine: step 1/2. Its activity is regulated as follows. Inhibited in feedback fashion by the catecholamine neurotransmitters, especially by dopamine in competition with tetrahydrobiopterin. Phosphorylation of several Ser/Thr residues in the N-terminus regulates the catalytic activity. Ser-31 and Ser-40 are readily phosphorylated to activate the catalytic activity. A cysteine modification induced by N-ethylmaleimide (NEM), inhibits tyrosine 3-monooxygenase activity through the modification of the Cys-177. In terms of biological role, catalyzes the conversion of L-tyrosine to L-dihydroxyphenylalanine (L-Dopa), the rate-limiting step in the biosynthesis of catecholamines, dopamine, noradrenaline, and adrenaline. Uses tetrahydrobiopterin and molecular oxygen to convert tyrosine to L-Dopa. In addition to tyrosine, is able to catalyze the hydroxylation of phenylalanine and tryptophan but with lower specificity. Positively regulates the regression of retinal hyaloid vessels during postnatal development. This is Tyrosine 3-monooxygenase (Th) from Rattus norvegicus (Rat).